A 247-amino-acid chain; its full sequence is tRNA uridine(34) hydroxylase (247 aa).

Positions 124–218 (TKQDVIVIDT…YLEDTQNKNN (95 aa)) constitute a Rhodanese domain. C178 serves as the catalytic Cysteine persulfide intermediate.

It belongs to the TrhO family.

The enzyme catalyses uridine(34) in tRNA + AH2 + O2 = 5-hydroxyuridine(34) in tRNA + A + H2O. Functionally, catalyzes oxygen-dependent 5-hydroxyuridine (ho5U) modification at position 34 in tRNAs. This is tRNA uridine(34) hydroxylase from Rickettsia massiliae (strain Mtu5).